A 394-amino-acid chain; its full sequence is Probable nucleoredoxin 2 (394 aa).

2 consecutive Thioredoxin domains span residues 15 to 176 (GVGG…QTLE) and 180 to 327 (SVSG…EMED).

The protein belongs to the nucleoredoxin family.

It catalyses the reaction [protein]-dithiol + NAD(+) = [protein]-disulfide + NADH + H(+). The enzyme catalyses [protein]-dithiol + NADP(+) = [protein]-disulfide + NADPH + H(+). In terms of biological role, probable thiol-disulfide oxidoreductase that may participate in various redox reactions. This Oryza sativa subsp. japonica (Rice) protein is Probable nucleoredoxin 2.